A 128-amino-acid chain; its full sequence is Deoxycytidylate deaminase (128 aa).

Residues 5-128 (DWDEYFLGIA…IERVVYPKES (124 aa)) enclose the CMP/dCMP-type deaminase domain. A Zn(2+)-binding site is contributed by H81. E83 functions as the Proton donor in the catalytic mechanism. 2 residues coordinate Zn(2+): C107 and C110.

This sequence belongs to the cytidine and deoxycytidylate deaminase family.

It catalyses the reaction dCMP + H2O + H(+) = dUMP + NH4(+). This Mycobacterium (Mycobacteriophage D29) protein is Deoxycytidylate deaminase (36.1).